We begin with the raw amino-acid sequence, 84 residues long: Cell division topological specificity factor (84 aa).

The protein belongs to the MinE family.

Prevents the cell division inhibition by proteins MinC and MinD at internal division sites while permitting inhibition at polar sites. This ensures cell division at the proper site by restricting the formation of a division septum at the midpoint of the long axis of the cell. The chain is Cell division topological specificity factor from Hydrogenovibrio crunogenus (strain DSM 25203 / XCL-2) (Thiomicrospira crunogena).